An 84-amino-acid chain; its full sequence is Small ribosomal subunit protein eS27-like (84 aa).

Over residues 1 to 16 (MPLARDLLHPSLDEEK) the composition is skewed to basic and acidic residues. The tract at residues 1–23 (MPLARDLLHPSLDEEKKKHKKKR) is disordered. The C4-type zinc finger occupies 38 to 60 (PGCYKITTVFSHAQTVVLCVGCS).

Belongs to the eukaryotic ribosomal protein eS27 family. Requires Zn(2+) as cofactor.

The chain is Small ribosomal subunit protein eS27-like (RPS27L) from Bos taurus (Bovine).